The sequence spans 643 residues: Fructose-1,6-bisphosphatase class 3 (643 aa).

It belongs to the FBPase class 3 family. Mn(2+) serves as cofactor.

The catalysed reaction is beta-D-fructose 1,6-bisphosphate + H2O = beta-D-fructose 6-phosphate + phosphate. It participates in carbohydrate biosynthesis; gluconeogenesis. The polypeptide is Fructose-1,6-bisphosphatase class 3 (Streptococcus agalactiae serotype Ia (strain ATCC 27591 / A909 / CDC SS700)).